A 438-amino-acid polypeptide reads, in one-letter code: UDP-N-acetylmuramoylalanine--D-glutamate ligase (438 aa).

Residue 105–111 (GSNGKTT) participates in ATP binding.

This sequence belongs to the MurCDEF family.

It is found in the cytoplasm. The enzyme catalyses UDP-N-acetyl-alpha-D-muramoyl-L-alanine + D-glutamate + ATP = UDP-N-acetyl-alpha-D-muramoyl-L-alanyl-D-glutamate + ADP + phosphate + H(+). It functions in the pathway cell wall biogenesis; peptidoglycan biosynthesis. Its function is as follows. Cell wall formation. Catalyzes the addition of glutamate to the nucleotide precursor UDP-N-acetylmuramoyl-L-alanine (UMA). The chain is UDP-N-acetylmuramoylalanine--D-glutamate ligase from Oenococcus oeni (strain ATCC BAA-331 / PSU-1).